A 263-amino-acid polypeptide reads, in one-letter code: Undecaprenyl-diphosphatase 2 (263 aa).

Transmembrane regions (helical) follow at residues Gly15–Phe37, Ala42–Trp62, Leu83–Ile103, Val106–Val126, Ile142–Phe162, Ala183–Ile203, Leu216–Leu236, and Val242–Ile262.

The protein belongs to the UppP family.

Its subcellular location is the cell membrane. The catalysed reaction is di-trans,octa-cis-undecaprenyl diphosphate + H2O = di-trans,octa-cis-undecaprenyl phosphate + phosphate + H(+). Functionally, catalyzes the dephosphorylation of undecaprenyl diphosphate (UPP). Confers resistance to bacitracin. This chain is Undecaprenyl-diphosphatase 2, found in Bacillus cereus (strain ATCC 10987 / NRS 248).